A 524-amino-acid chain; its full sequence is Bifunctional purine biosynthesis protein PurH (524 aa).

Residues 1–149 form the MGS-like domain; that stretch reads MSDPLIKRAL…KNNESVTVLT (149 aa).

The protein belongs to the PurH family.

It catalyses the reaction (6R)-10-formyltetrahydrofolate + 5-amino-1-(5-phospho-beta-D-ribosyl)imidazole-4-carboxamide = 5-formamido-1-(5-phospho-D-ribosyl)imidazole-4-carboxamide + (6S)-5,6,7,8-tetrahydrofolate. It carries out the reaction IMP + H2O = 5-formamido-1-(5-phospho-D-ribosyl)imidazole-4-carboxamide. Its pathway is purine metabolism; IMP biosynthesis via de novo pathway; 5-formamido-1-(5-phospho-D-ribosyl)imidazole-4-carboxamide from 5-amino-1-(5-phospho-D-ribosyl)imidazole-4-carboxamide (10-formyl THF route): step 1/1. The protein operates within purine metabolism; IMP biosynthesis via de novo pathway; IMP from 5-formamido-1-(5-phospho-D-ribosyl)imidazole-4-carboxamide: step 1/1. In Chlorobium luteolum (strain DSM 273 / BCRC 81028 / 2530) (Pelodictyon luteolum), this protein is Bifunctional purine biosynthesis protein PurH.